We begin with the raw amino-acid sequence, 245 residues long: Aquaporin SIP1-1 (245 aa).

The next 2 membrane-spanning stretches (helical) occupy residues 14 to 34 and 55 to 75; these read AVVT…TAAV and LLSV…GASF. Residues 76–78 carry the NPA 1 motif; it reads NPT. A run of 3 helical transmembrane segments spans residues 100–120, 138–158, and 164–184; these read FPAQ…LMPA, GALA…WVIV, and VILK…AGAE. The short motif at 191–193 is the NPA 2 element; the sequence is NPA. The chain crosses the membrane as a helical span at residues 213 to 233; that stretch reads VYWICPFIGAMLAGWIFRVVF.

Belongs to the MIP/aquaporin (TC 1.A.8) family. SIP (TC 1.A.8.10) subfamily.

The protein resides in the membrane. Aquaporins facilitate the transport of water and small neutral solutes across cell membranes. This is Aquaporin SIP1-1 (SIP1-1) from Zea mays (Maize).